The following is a 319-amino-acid chain: ATP-dependent 6-phosphofructokinase (319 aa).

Gly11 is a binding site for ATP. 21-25 (RAVVR) lines the ADP pocket. ATP is bound by residues 72–73 (RC) and 102–105 (GDGS). Asp103 is a binding site for Mg(2+). Residue 125 to 127 (TID) participates in substrate binding. The active-site Proton acceptor is the Asp127. Arg154 is an ADP binding site. Substrate contacts are provided by residues Arg162 and 169–171 (MGR). Residues 185–187 (GAE), Arg211, and 213–215 (KKH) each bind ADP. Substrate contacts are provided by residues Glu222, Arg243, and 249–252 (HVQR).

This sequence belongs to the phosphofructokinase type A (PFKA) family. ATP-dependent PFK group I subfamily. Prokaryotic clade 'B1' sub-subfamily. As to quaternary structure, homotetramer. Mg(2+) serves as cofactor.

It localises to the cytoplasm. The catalysed reaction is beta-D-fructose 6-phosphate + ATP = beta-D-fructose 1,6-bisphosphate + ADP + H(+). It functions in the pathway carbohydrate degradation; glycolysis; D-glyceraldehyde 3-phosphate and glycerone phosphate from D-glucose: step 3/4. Its activity is regulated as follows. Allosterically activated by ADP and other diphosphonucleosides, and allosterically inhibited by phosphoenolpyruvate. Its function is as follows. Catalyzes the phosphorylation of D-fructose 6-phosphate to fructose 1,6-bisphosphate by ATP, the first committing step of glycolysis. This Geobacillus kaustophilus (strain HTA426) protein is ATP-dependent 6-phosphofructokinase.